We begin with the raw amino-acid sequence, 264 residues long: Thymidylate synthase (264 aa).

Arg21 contributes to the dUMP binding site. Position 51 (His51) interacts with (6R)-5,10-methylene-5,6,7,8-tetrahydrofolate. 126–127 contributes to the dUMP binding site; the sequence is RR. The Nucleophile role is filled by Cys146. Residues 166-169, Asn177, and 207-209 contribute to the dUMP site; these read RSCD and HLY. A (6R)-5,10-methylene-5,6,7,8-tetrahydrofolate-binding site is contributed by Asp169. Ala263 lines the (6R)-5,10-methylene-5,6,7,8-tetrahydrofolate pocket.

This sequence belongs to the thymidylate synthase family. Bacterial-type ThyA subfamily. Homodimer.

The protein localises to the cytoplasm. The catalysed reaction is dUMP + (6R)-5,10-methylene-5,6,7,8-tetrahydrofolate = 7,8-dihydrofolate + dTMP. It functions in the pathway pyrimidine metabolism; dTTP biosynthesis. Functionally, catalyzes the reductive methylation of 2'-deoxyuridine-5'-monophosphate (dUMP) to 2'-deoxythymidine-5'-monophosphate (dTMP) while utilizing 5,10-methylenetetrahydrofolate (mTHF) as the methyl donor and reductant in the reaction, yielding dihydrofolate (DHF) as a by-product. This enzymatic reaction provides an intracellular de novo source of dTMP, an essential precursor for DNA biosynthesis. This Xenorhabdus nematophila (strain ATCC 19061 / DSM 3370 / CCUG 14189 / LMG 1036 / NCIMB 9965 / AN6) protein is Thymidylate synthase.